A 115-amino-acid chain; its full sequence is NADH-ubiquinone oxidoreductase chain 3 (115 aa).

3 consecutive transmembrane segments (helical) span residues 3-23, 55-75, and 84-104; these read FVLA…ITFW, FFLV…LLPL, and LPLM…GLTY.

It belongs to the complex I subunit 3 family. Core subunit of respiratory chain NADH dehydrogenase (Complex I) which is composed of 45 different subunits. Interacts with TMEM186. Interacts with TMEM242.

The protein localises to the mitochondrion inner membrane. The catalysed reaction is a ubiquinone + NADH + 5 H(+)(in) = a ubiquinol + NAD(+) + 4 H(+)(out). Core subunit of the mitochondrial membrane respiratory chain NADH dehydrogenase (Complex I) which catalyzes electron transfer from NADH through the respiratory chain, using ubiquinone as an electron acceptor. Essential for the catalytic activity of complex I. The protein is NADH-ubiquinone oxidoreductase chain 3 of Pongo abelii (Sumatran orangutan).